The following is a 329-amino-acid chain: Putative glucose-6-phosphate 1-epimerase (329 aa).

The segment covering 1–13 has biased composition (low complexity); sequence MAAPAPAGAAASP. The disordered stretch occupies residues 1 to 20; that stretch reads MAAPAPAGAAASPSPKPQLP. Residues arginine 82, glutamine 100, and arginine 105 each contribute to the substrate site. Residue histidine 183 is part of the active site. Aspartate 228 contributes to the substrate binding site. Glutamate 287 is an active-site residue.

The protein belongs to the glucose-6-phosphate 1-epimerase family.

The catalysed reaction is alpha-D-glucose 6-phosphate = beta-D-glucose 6-phosphate. The protein is Putative glucose-6-phosphate 1-epimerase of Cenchrus ciliaris (Buffelgrass).